The following is a 157-amino-acid chain: Ribosome maturation factor RimP (157 aa).

This sequence belongs to the RimP family.

It is found in the cytoplasm. Its function is as follows. Required for maturation of 30S ribosomal subunits. In Thermobifida fusca (strain YX), this protein is Ribosome maturation factor RimP.